A 309-amino-acid chain; its full sequence is Glutaminase (309 aa).

Substrate is bound by residues Ser-65, Asn-117, Glu-162, Asn-169, Tyr-193, Tyr-245, and Val-263.

Belongs to the glutaminase family. In terms of assembly, homotetramer.

The enzyme catalyses L-glutamine + H2O = L-glutamate + NH4(+). The polypeptide is Glutaminase (Shouchella clausii (strain KSM-K16) (Alkalihalobacillus clausii)).